A 264-amino-acid polypeptide reads, in one-letter code: Undecaprenyl-diphosphatase (264 aa).

Helical transmembrane passes span 1–21, 39–59, 83–103, 113–133, 143–163, 184–204, 220–240, and 243–263; these read MEIS…FLPI, QGLA…LFYF, SLLV…GLLF, SGVV…FADL, MTIK…IPGV, ANFS…LESI, LGVI…MGII, and IRML…LYLF.

It belongs to the UppP family.

Its subcellular location is the cell inner membrane. The catalysed reaction is di-trans,octa-cis-undecaprenyl diphosphate + H2O = di-trans,octa-cis-undecaprenyl phosphate + phosphate + H(+). Functionally, catalyzes the dephosphorylation of undecaprenyl diphosphate (UPP). Confers resistance to bacitracin. The chain is Undecaprenyl-diphosphatase from Campylobacter concisus (strain 13826).